A 156-amino-acid polypeptide reads, in one-letter code: SCP2 sterol-binding domain-containing protein 1 (156 aa).

The region spanning 44 to 156 (NFSVFEDISQ…ERIFREWAKI (113 aa)) is the SCP2 domain.

The polypeptide is SCP2 sterol-binding domain-containing protein 1 (Scp2d1) (Mus musculus (Mouse)).